We begin with the raw amino-acid sequence, 1228 residues long: Calcium-transporting ATPase (1228 aa).

The Cytoplasmic segment spans residues 1-63 (MEEVIKNAHT…FELILNQFDD (63 aa)). The helical transmembrane segment at 64–81 (LLVKILLLAAFISFVLTL) threads the bilayer. At 82–92 (LDMKHKKIEIC) the chain is on the extracellular side. The helical transmembrane segment at 93–112 (DFIEPLVIVLILILNAAVGV) threads the bilayer. At 113–270 (WQECNAEKSL…IDLFGQQLSK (158 aa)) the chain is on the cytoplasmic side. A helical transmembrane segment spans residues 271 to 291 (IIFVICVTVWIINFKHFSDPI). Residues 292–300 (HGSFLYGCL) lie on the Extracellular side of the membrane. Residues 301–321 (YYFKISVALAVAAIPEGLPAV) traverse the membrane as a helical segment. At 322–974 (ITTCLALGTR…IYNNMKAFIR (653 aa)) the chain is on the cytoplasmic side. Asp358 (4-aspartylphosphate intermediate) is an active-site residue. Disordered regions lie at residues 452 to 478 (MKND…IPLK) and 562 to 613 (MPAE…LKNA). Residues 589–604 (FFSSKNDNSHITSTLN) are compositionally biased toward polar residues. Lys716 is an ATP binding site. A helical membrane pass occupies residues 975 to 994 (YLISSNIGEVASIFITALLG). Residues 995–1000 (IPDSLA) lie on the Extracellular side of the membrane. A helical membrane pass occupies residues 1001–1021 (PVQLLWVNLVTDGLPATALGF). Topologically, residues 1022–1042 (NPPEHDVMKCKPRHKNDNLIN) are cytoplasmic. The helical transmembrane segment at 1043 to 1067 (GLTLLRYIIIGTYVGIATVSIFVYW) threads the bilayer. Residues 1068–1118 (FLFYPDSDMHTLINFYQLSHYNQCKAWNNFRVNKVYDMSEDHCSYFSAGKI) lie on the Extracellular side of the membrane. The helical transmembrane segment at 1119-1140 (KASTLSLSVLVLIEMFNALNAL) threads the bilayer. Over 1141–1151 (SEYNSLFEIPP) the chain is Cytoplasmic. A helical membrane pass occupies residues 1152-1172 (WRNMYLVLATIGSLLLHVLIL). Residues 1173-1185 (YIPPLARIFGVVP) are Extracellular-facing. A helical membrane pass occupies residues 1186-1206 (LSAYDWFLVFLWSFPVIILDE). At 1207-1228 (IIKFYAKRKLKEEQRTKKIKID) the chain is on the cytoplasmic side.

Belongs to the cation transport ATPase (P-type) (TC 3.A.3) family.

It localises to the membrane. It catalyses the reaction Ca(2+)(in) + ATP + H2O = Ca(2+)(out) + ADP + phosphate + H(+). This magnesium-dependent enzyme catalyzes the hydrolysis of ATP coupled with the transport of the calcium. The polypeptide is Calcium-transporting ATPase (ATP6) (Plasmodium falciparum (isolate K1 / Thailand)).